A 739-amino-acid polypeptide reads, in one-letter code: Poly(A) polymerase alpha (739 aa).

Low complexity predominate over residues Met1–Gln17. A disordered region spans residues Met1–Thr23. Ser10 and Ser24 each carry phosphoserine. ATP is bound by residues Phe100–Ser102, Thr109, Asp113–Asp115, Asp167, Lys228, Tyr237, and Gly246–Val247. Asp113, Asp115, and Asp167 together coordinate Mg(2+). Residues Lys444, Lys445, Lys506, and Lys507 each participate in a glycyl lysine isopeptide (Lys-Gly) (interchain with G-Cter in SUMO) cross-link. The Nuclear localization signal 1 signature appears at Arg490–Lys507. Disordered regions lie at residues Val501–Ala565 and Gln580–Thr700. The interval His508 to Val643 is ser/Thr-rich. Residues Leu518–Ser534 are compositionally biased toward low complexity. Positions Val535–Asn557 are enriched in polar residues. Position 537 is a phosphoserine; by MAPK (Ser537). Ser558 carries the phosphoserine modification. Over residues Ser583 to Ser594 the composition is skewed to low complexity. Polar residues predominate over residues Ile595–Ile604. Residues Thr611–Arg620 are compositionally biased toward low complexity. Residues Lys635 and Lys644 each carry the N6-acetyllysine modification. The short motif at Lys644 to Lys659 is the Nuclear localization signal 2 element. 2 stretches are compositionally biased toward basic and acidic residues: residues Pro649–Thr660 and Gly676–Leu686. The segment at Cys671 to Arg739 is required for interaction with NUDT21. The segment covering Thr688 to Thr700 has biased composition (low complexity). N6-acetyllysine; alternate is present on Lys730. Lys730 is covalently cross-linked (Glycyl lysine isopeptide (Lys-Gly) (interchain with G-Cter in SUMO); alternate). Residue Ser732 is modified to Phosphoserine. Lys734 carries the N6-acetyllysine; alternate modification. Residue Lys734 forms a Glycyl lysine isopeptide (Lys-Gly) (interchain with G-Cter in SUMO); alternate linkage.

Belongs to the poly(A) polymerase family. In terms of assembly, monomer. Found in a complex with CPSF1, FIP1L1 and PAPOLA. Interacts with AHCYL1 and FIP1L1; the interaction with AHCYL1 seems to increase interaction with FIP1L1. Interacts with NUDT21; the interaction is diminished by acetylation. Interacts with KPNB1; the interaction promotes PAP nuclear import and is inhibited by acetylation of PAP. It depends on Mg(2+) as a cofactor. Mn(2+) is required as a cofactor. Post-translationally, polysumoylated. Varying sumoylation depending on tissue- and cell-type. Highly sumoylated in bladder and NIH 3T3 cells. Sumoylation is required for nuclear localization and enhances PAP stability. Desumoylated by SENP1. Inhibits polymerase activity. Hyperphosphorylation on multiple CDK2 consensus and non-consensus sites in the C-terminal Ser/Thr-rich region represses PAP activity in late M-phase. Phosphorylation/dephosphorylation may regulate the interaction between PAP and CPSF. In terms of processing, acetylated in the C-terminus. Acetylation decreases interaction with NUDT21 and KPNB1, and inhibits nuclear localization through inhibiting binding to the importin alpha/beta complex.

It localises to the nucleus. It carries out the reaction RNA(n) + ATP = RNA(n)-3'-adenine ribonucleotide + diphosphate. In terms of biological role, polymerase that creates the 3'-poly(A) tail of mRNA's. Also required for the endoribonucleolytic cleavage reaction at some polyadenylation sites. May acquire specificity through interaction with a cleavage and polyadenylation specificity factor (CPSF) at its C-terminus. The protein is Poly(A) polymerase alpha (PAPOLA) of Bos taurus (Bovine).